Consider the following 953-residue polypeptide: UvrABC system protein A (953 aa).

33-40 contributes to the ATP binding site; it reads GLSGSGKS. ABC transporter domains follow at residues 320 to 599 and 619 to 949; these read WGST…EESI and GHDN…RYLK. 652–659 contacts ATP; it reads GVSGSGKS. A C4-type zinc finger spans residues 752–778; sequence CEACQGDGLIKIEMHFLPDVYVKCDIC.

This sequence belongs to the ABC transporter superfamily. UvrA family. In terms of assembly, forms a heterotetramer with UvrB during the search for lesions.

Its subcellular location is the cytoplasm. Functionally, the UvrABC repair system catalyzes the recognition and processing of DNA lesions. UvrA is an ATPase and a DNA-binding protein. A damage recognition complex composed of 2 UvrA and 2 UvrB subunits scans DNA for abnormalities. When the presence of a lesion has been verified by UvrB, the UvrA molecules dissociate. The polypeptide is UvrABC system protein A (Rickettsia prowazekii (strain Madrid E)).